Reading from the N-terminus, the 161-residue chain is SsrA-binding protein (161 aa).

This sequence belongs to the SmpB family.

Its subcellular location is the cytoplasm. Functionally, required for rescue of stalled ribosomes mediated by trans-translation. Binds to transfer-messenger RNA (tmRNA), required for stable association of tmRNA with ribosomes. tmRNA and SmpB together mimic tRNA shape, replacing the anticodon stem-loop with SmpB. tmRNA is encoded by the ssrA gene; the 2 termini fold to resemble tRNA(Ala) and it encodes a 'tag peptide', a short internal open reading frame. During trans-translation Ala-aminoacylated tmRNA acts like a tRNA, entering the A-site of stalled ribosomes, displacing the stalled mRNA. The ribosome then switches to translate the ORF on the tmRNA; the nascent peptide is terminated with the 'tag peptide' encoded by the tmRNA and targeted for degradation. The ribosome is freed to recommence translation, which seems to be the essential function of trans-translation. This chain is SsrA-binding protein, found in Baumannia cicadellinicola subsp. Homalodisca coagulata.